The chain runs to 872 residues: Alanine--tRNA ligase (872 aa).

H571, H575, C674, and H678 together coordinate Zn(2+).

It belongs to the class-II aminoacyl-tRNA synthetase family. It depends on Zn(2+) as a cofactor.

The protein localises to the cytoplasm. It carries out the reaction tRNA(Ala) + L-alanine + ATP = L-alanyl-tRNA(Ala) + AMP + diphosphate. Functionally, catalyzes the attachment of alanine to tRNA(Ala) in a two-step reaction: alanine is first activated by ATP to form Ala-AMP and then transferred to the acceptor end of tRNA(Ala). Also edits incorrectly charged Ser-tRNA(Ala) and Gly-tRNA(Ala) via its editing domain. The sequence is that of Alanine--tRNA ligase from Symbiobacterium thermophilum (strain DSM 24528 / JCM 14929 / IAM 14863 / T).